The sequence spans 176 residues: Adenine phosphoribosyltransferase (176 aa).

Belongs to the purine/pyrimidine phosphoribosyltransferase family. As to quaternary structure, homodimer.

The protein resides in the cytoplasm. The catalysed reaction is AMP + diphosphate = 5-phospho-alpha-D-ribose 1-diphosphate + adenine. It functions in the pathway purine metabolism; AMP biosynthesis via salvage pathway; AMP from adenine: step 1/1. Its function is as follows. Catalyzes a salvage reaction resulting in the formation of AMP, that is energically less costly than de novo synthesis. This chain is Adenine phosphoribosyltransferase, found in Bacteroides thetaiotaomicron (strain ATCC 29148 / DSM 2079 / JCM 5827 / CCUG 10774 / NCTC 10582 / VPI-5482 / E50).